The following is a 231-amino-acid chain: Orotate phosphoribosyltransferase (231 aa).

5-phospho-alpha-D-ribose 1-diphosphate is bound at residue Lys-29. 37 to 38 is a binding site for orotate; the sequence is FF. 5-phospho-alpha-D-ribose 1-diphosphate contacts are provided by residues 75–76, Arg-107, Lys-108, Lys-111, His-113, and 133–141; these read YK and DDVISRCTA. Orotate contacts are provided by Ser-137 and Arg-165.

The protein belongs to the purine/pyrimidine phosphoribosyltransferase family. PyrE subfamily. As to quaternary structure, homodimer.

The catalysed reaction is orotidine 5'-phosphate + diphosphate = orotate + 5-phospho-alpha-D-ribose 1-diphosphate. It participates in pyrimidine metabolism; UMP biosynthesis via de novo pathway; UMP from orotate: step 1/2. In terms of biological role, catalyzes the transfer of a ribosyl phosphate group from 5-phosphoribose 1-diphosphate to orotate, leading to the formation of orotidine monophosphate (OMP). This is Orotate phosphoribosyltransferase (URA5) from Podospora anserina (Pleurage anserina).